The sequence spans 101 residues: Apolipoprotein C-II (101 aa).

The signal sequence occupies residues 1–26 (MGTRYFLALFLILLVLGFKVQGVAMA). The tract at residues 66–74 (TMDEKIRDI) is lipid binding. The lipoprotein lipase cofactor stretch occupies residues 78 to 101 (STAAVTTYAGIFTDQLLSLLKGDQ).

The protein belongs to the apolipoprotein C2 family. In terms of processing, proapolipoprotein C-II is synthesized as a sialic acid containing glycoprotein which is subsequently desialylated prior to its proteolytic processing. Proapolipoprotein C-II undergoes proteolytic cleavage of its N-terminal hexapeptide to generate apolipoprotein C-II. In bovine, proapolipoprotein C-II was found to be the minor form whereas apolipoprotein C-II was found to be the major form in plasma.

It localises to the secreted. Component of chylomicrons, very low-density lipoproteins (VLDL), low-density lipoproteins (LDL), and high-density lipoproteins (HDL) in plasma. Plays an important role in lipoprotein metabolism as an activator of lipoprotein lipase. Both proapolipoprotein C-II and apolipoprotein C-II can activate lipoprotein lipase. The sequence is that of Apolipoprotein C-II (APOC2) from Camelus dromedarius (Dromedary).